A 20-amino-acid polypeptide reads, in one-letter code: Cytosol aminopeptidase (20 aa).

At S6 the chain carries Phosphoserine.

Belongs to the peptidase M17 family. Homohexamer. Zn(2+) is required as a cofactor. Mn(2+) serves as cofactor.

Its subcellular location is the cytoplasm. The enzyme catalyses Release of an N-terminal amino acid, Xaa-|-Yaa-, in which Xaa is preferably Leu, but may be other amino acids including Pro although not Arg or Lys, and Yaa may be Pro. Amino acid amides and methyl esters are also readily hydrolyzed, but rates on arylamides are exceedingly low.. It carries out the reaction an S-substituted L-cysteinylglycine + H2O = an S-substituted L-cysteine + glycine. The catalysed reaction is L-cysteinylglycine + H2O = L-cysteine + glycine. It catalyses the reaction S-benzyl-L-cysteinylglycine + H2O = S-benzyl-L-cysteine + glycine. The enzyme catalyses Release of N-terminal proline from a peptide.. Cytosolic metallopeptidase that catalyzes the removal of unsubstituted N-terminal hydrophobic amino acids from various peptides. The presence of Zn(2+) ions is essential for the peptidase activity, and the association with other cofactors can modulate the substrate spectificity of the enzyme. For instance, in the presence of Mn(2+), it displays a specific Cys-Gly hydrolyzing activity of Cys-Gly-S-conjugates. Involved in the metabolism of glutathione and in the degradation of glutathione S-conjugates, which may play a role in the control of the cell redox status. This Mesocricetus auratus (Golden hamster) protein is Cytosol aminopeptidase.